The chain runs to 441 residues: Synaptotagmin-1 (441 aa).

Topologically, residues 1-69 (MVKLDFSSQD…DVVKEKVMQQ (69 aa)) are vesicular. The chain crosses the membrane as a helical span at residues 70-96 (TGMPEWAFVFLGFVFILLVLACAFCLI). The Cytoplasmic segment spans residues 97 to 441 (RKLFGKKRHG…EEGDKKDDKK (345 aa)). 2 consecutive C2 domains span residues 159–278 (KLGR…EEWK) and 292–425 (SLGD…AQWH). Residues Asp190, Asp196, Asp248, Phe249, Asp250, Ser253, Lys254, Asp256, Asp323, Asp329, Asp383, Asp385, and Asp391 each coordinate Ca(2+).

The protein belongs to the synaptotagmin family. It depends on Ca(2+) as a cofactor. Localized to regions known to be rich in synapses and appears to be associated with synaptic vesicles. Also found in some non-neuronal secretory structures.

It localises to the cytoplasmic vesicle. The protein resides in the secretory vesicle. It is found in the synaptic vesicle membrane. The protein localises to the synapse. Functionally, may have a regulatory role in the membrane interactions during trafficking of synaptic vesicles at the active zone of the synapse. It binds acidic phospholipids with a specificity that requires the presence of both an acidic head group and a diacyl backbone. Involved in necrotic cell death. The polypeptide is Synaptotagmin-1 (snt-1) (Caenorhabditis elegans).